A 459-amino-acid polypeptide reads, in one-letter code: E3 ubiquitin-protein ligase RNF25 (459 aa).

Positions 18–128 (SEVEVLESIY…EKGKEILTDN (111 aa)) constitute an RWD domain. Zn(2+)-binding residues include Cys135, Cys138, Cys153, His155, His158, Cys161, Cys198, and Cys201. An RING-type zinc finger spans residues 135–202 (CVICLYGFQE…AVGVQCPVCR (68 aa)). Disordered regions lie at residues 268 to 309 (PPAP…PPLP) and 322 to 459 (TRSN…KDGS). The segment covering 282–303 (KGSQPPSTLAAELSTSPAVQST) has biased composition (polar residues). Composition is skewed to basic and acidic residues over residues 349 to 370 (QPER…RDTQ), 378 to 389 (PLKEPMDLKPEP), 413 to 424 (RTRDCVRWERSK), and 446 to 459 (TRRE…KDGS). Ser450 is modified (phosphoserine).

The protein belongs to the RNF25 family. Interacts with UBE2D2, and may also interact with UBE2E1 and UBE2E3. Interacts with RELA/p65. In terms of processing, ubiquitinated; autoubiquitinated.

The protein resides in the cytoplasm. It carries out the reaction S-ubiquitinyl-[E2 ubiquitin-conjugating enzyme]-L-cysteine + [acceptor protein]-L-lysine = [E2 ubiquitin-conjugating enzyme]-L-cysteine + N(6)-ubiquitinyl-[acceptor protein]-L-lysine.. Its pathway is protein modification; protein ubiquitination. E3 ubiquitin-protein ligase that plays a key role in the RNF14-RNF25 translation quality control pathway, a pathway that takes place when a ribosome has stalled during translation, and which promotes ubiquitination and degradation of translation factors on stalled ribosomes. Catalyzes ubiquitination of RPS27A in response to ribosome collisions, promoting activation of RNF14. RNF25 catalyzes ubiquitination of other ribosomal proteins on stalled ribosomes, such as RPL0, RPL1, RPL12, RPS13 and RPS17. Also involved in ubiquitination and degradation of stalled ETF1/eRF1. Independently of its function in the response to stalled ribosomes, mediates ubiquitination and subsequent proteasomal degradation of NKD2. May also stimulate transcription mediated by NF-kappa-B via its interaction with RELA/p65. The protein is E3 ubiquitin-protein ligase RNF25 of Homo sapiens (Human).